The sequence spans 333 residues: Ketol-acid reductoisomerase (NADP(+)) (333 aa).

The KARI N-terminal Rossmann domain occupies 1–179 (MFYDDDADLT…GGTRAGVIKT (179 aa)). Residues 22 to 25 (YGSQ), Lys-45, Ser-48, Ser-50, and 80 to 83 (DTAQ) contribute to the NADP(+) site. The active site involves His-105. Gly-131 is a binding site for NADP(+). One can recognise a KARI C-terminal knotted domain in the interval 180–325 (TFKDETETDL…KRLRDLMSWV (146 aa)). The Mg(2+) site is built by Asp-188, Glu-192, Glu-224, and Glu-228. A substrate-binding site is contributed by Ser-249.

The protein belongs to the ketol-acid reductoisomerase family. Mg(2+) serves as cofactor.

It carries out the reaction (2R)-2,3-dihydroxy-3-methylbutanoate + NADP(+) = (2S)-2-acetolactate + NADPH + H(+). The catalysed reaction is (2R,3R)-2,3-dihydroxy-3-methylpentanoate + NADP(+) = (S)-2-ethyl-2-hydroxy-3-oxobutanoate + NADPH + H(+). It functions in the pathway amino-acid biosynthesis; L-isoleucine biosynthesis; L-isoleucine from 2-oxobutanoate: step 2/4. Its pathway is amino-acid biosynthesis; L-valine biosynthesis; L-valine from pyruvate: step 2/4. In terms of biological role, involved in the biosynthesis of branched-chain amino acids (BCAA). Catalyzes an alkyl-migration followed by a ketol-acid reduction of (S)-2-acetolactate (S2AL) to yield (R)-2,3-dihydroxy-isovalerate. In the isomerase reaction, S2AL is rearranged via a Mg-dependent methyl migration to produce 3-hydroxy-3-methyl-2-ketobutyrate (HMKB). In the reductase reaction, this 2-ketoacid undergoes a metal-dependent reduction by NADPH to yield (R)-2,3-dihydroxy-isovalerate. The protein is Ketol-acid reductoisomerase (NADP(+)) of Mycobacterium avium (strain 104).